Consider the following 967-residue polypeptide: Phosphoenolpyruvate carboxylase (967 aa).

Ser11 bears the Phosphoserine mark. Active-site residues include His172 and Lys601.

It belongs to the PEPCase type 1 family. In terms of assembly, homotetramer. Mg(2+) serves as cofactor.

It localises to the cytoplasm. It carries out the reaction oxaloacetate + phosphate = phosphoenolpyruvate + hydrogencarbonate. The protein operates within photosynthesis; C3 acid pathway. Its activity is regulated as follows. By light-reversible phosphorylation. Through the carboxylation of phosphoenolpyruvate (PEP) it forms oxaloacetate, a four-carbon dicarboxylic acid source for the tricarboxylic acid cycle. The chain is Phosphoenolpyruvate carboxylase (PPCA1) from Flaveria pringlei.